We begin with the raw amino-acid sequence, 247 residues long: Elongation factor Ts (247 aa).

The segment at 82-85 (TDFV) is involved in Mg(2+) ion dislocation from EF-Tu.

This sequence belongs to the EF-Ts family.

The protein resides in the cytoplasm. In terms of biological role, associates with the EF-Tu.GDP complex and induces the exchange of GDP to GTP. It remains bound to the aminoacyl-tRNA.EF-Tu.GTP complex up to the GTP hydrolysis stage on the ribosome. This is Elongation factor Ts (tsf) from Arthrospira platensis (Spirulina platensis).